The primary structure comprises 635 residues: Threonine--tRNA ligase (635 aa).

The 61-residue stretch at 1–61 folds into the TGS domain; the sequence is MINISFPDGS…DNDCKLRILT (61 aa). Residues 242 to 533 are catalytic; the sequence is DHRKLGRELD…LIEEYAGRFP (292 aa). Residues Cys333, His384, and His510 each contribute to the Zn(2+) site.

Belongs to the class-II aminoacyl-tRNA synthetase family. As to quaternary structure, homodimer. The cofactor is Zn(2+).

It localises to the cytoplasm. The enzyme catalyses tRNA(Thr) + L-threonine + ATP = L-threonyl-tRNA(Thr) + AMP + diphosphate + H(+). Catalyzes the attachment of threonine to tRNA(Thr) in a two-step reaction: L-threonine is first activated by ATP to form Thr-AMP and then transferred to the acceptor end of tRNA(Thr). Also edits incorrectly charged L-seryl-tRNA(Thr). The chain is Threonine--tRNA ligase from Rickettsia conorii (strain ATCC VR-613 / Malish 7).